Reading from the N-terminus, the 450-residue chain is Glutamyl-tRNA reductase (450 aa).

Substrate-binding positions include Thr45–Arg48, Ser107, Glu112–Glu114, and Gln118. Residue Cys46 is the Nucleophile of the active site. Gly196–Ala201 contributes to the NADP(+) binding site.

The protein belongs to the glutamyl-tRNA reductase family. In terms of assembly, homodimer.

The enzyme catalyses (S)-4-amino-5-oxopentanoate + tRNA(Glu) + NADP(+) = L-glutamyl-tRNA(Glu) + NADPH + H(+). Its pathway is porphyrin-containing compound metabolism; protoporphyrin-IX biosynthesis; 5-aminolevulinate from L-glutamyl-tRNA(Glu): step 1/2. Its function is as follows. Catalyzes the NADPH-dependent reduction of glutamyl-tRNA(Glu) to glutamate 1-semialdehyde (GSA). The chain is Glutamyl-tRNA reductase from Micrococcus luteus (strain ATCC 4698 / DSM 20030 / JCM 1464 / CCM 169 / CCUG 5858 / IAM 1056 / NBRC 3333 / NCIMB 9278 / NCTC 2665 / VKM Ac-2230) (Micrococcus lysodeikticus).